The sequence spans 537 residues: O-phosphoserine--tRNA(Cys) ligase (537 aa).

Residues 186–188, 231–233, 273–274, and Asn317 each bind substrate; these read HMT, SAS, and YY.

It belongs to the class-II aminoacyl-tRNA synthetase family. O-phosphoseryl-tRNA(Cys) synthetase subfamily. As to quaternary structure, homotetramer. Interacts with SepCysS.

The catalysed reaction is tRNA(Cys) + O-phospho-L-serine + ATP = O-phospho-L-seryl-tRNA(Cys) + AMP + diphosphate. Its function is as follows. Catalyzes the attachment of O-phosphoserine (Sep) to tRNA(Cys). The sequence is that of O-phosphoserine--tRNA(Cys) ligase from Methanococcus maripaludis (strain C6 / ATCC BAA-1332).